Here is a 461-residue protein sequence, read N- to C-terminus: Vitamin K-dependent protein C (461 aa).

An N-terminal signal peptide occupies residues 1–18 (MWQLTSLLLFVATWGISG). O-linked (GalNAc...) threonine glycosylation occurs at T19. The propeptide occupies 19–42 (TPAPLDSVFSSSERAHQVLRIRKR). In terms of domain architecture, Gla spans 43–88 (ANSFLEELRHSSLERECIEEICDFEEAKEIFQNVDDTLAFWSKHVD). A 4-carboxyglutamate mark is found at E48, E49, E56, E58, E61, E62, E67, E68, and E71. An intrachain disulfide couples C59 to C64. 4 disulfide bridges follow: C92-C111, C101-C106, C105-C120, and C122-C131. EGF-like domains follow at residues 97–132 (LEHPCASLCCGHGTCIDGIGSFSCDCRSGWEGRFCQ) and 136–176 (SFLN…LQCH). At D113 the chain carries (3R)-3-hydroxyaspartate. N139 is a glycosylation site (N-linked (GlcNAc...) asparagine). 5 disulfide bridges follow: C140–C151, C147–C160, C162–C175, C183–C319, and C238–C254. The Peptidase S1 domain occupies 212–450 (LIDGKMTRRG…YLDWIHGHIR (239 aa)). The active-site Charge relay system is the H253. The N-linked (GlcNAc...) asparagine glycan is linked to N290. Catalysis depends on D299, which acts as the Charge relay system. A Phosphoserine; by FAM20C modification is found at S347. Residue N355 is glycosylated (N-linked (GlcNAc...) asparagine). N371 carries N-linked (GlcNAc...) asparagine; atypical; partial glycosylation. 2 disulfide bridges follow: C373/C387 and C398/C426. S402 serves as the catalytic Charge relay system.

It belongs to the peptidase S1 family. In terms of assembly, synthesized as a single chain precursor, which is cleaved into a light chain and a heavy chain held together by a disulfide bond. The enzyme is then activated by thrombin, which cleaves a tetradecapeptide from the amino end of the heavy chain; this reaction, which occurs at the surface of endothelial cells, is strongly promoted by thrombomodulin. Interacts (activated) with iripin-8, a serine protease inhibitor from Ixodes ricinus saliva. In terms of processing, the vitamin K-dependent, enzymatic carboxylation of some Glu residues allows the modified protein to bind calcium. Post-translationally, N- and O-glycosylated. Partial (70%) N-glycosylation of Asn-371 with an atypical N-X-C site produces a higher molecular weight form referred to as alpha. The lower molecular weight form, not N-glycosylated at Asn-371, is beta. O-glycosylated with core 1 or possibly core 8 glycans. The iron and 2-oxoglutarate dependent 3-hydroxylation of aspartate and asparagine is (R) stereospecific within EGF domains. In terms of processing, may be phosphorylated on a Ser or Thr in a region (AA 25-30) of the propeptide. As to expression, plasma; synthesized in the liver.

It is found in the secreted. It localises to the golgi apparatus. Its subcellular location is the endoplasmic reticulum. The enzyme catalyses Degradation of blood coagulation factors Va and VIIIa.. Protein C is a vitamin K-dependent serine protease that regulates blood coagulation by inactivating factors Va and VIIIa in the presence of calcium ions and phospholipids. Exerts a protective effect on the endothelial cell barrier function. The protein is Vitamin K-dependent protein C (PROC) of Homo sapiens (Human).